Here is a 115-residue protein sequence, read N- to C-terminus: Large ribosomal subunit protein bL19 (115 aa).

The protein belongs to the bacterial ribosomal protein bL19 family.

Functionally, this protein is located at the 30S-50S ribosomal subunit interface and may play a role in the structure and function of the aminoacyl-tRNA binding site. In Koribacter versatilis (strain Ellin345), this protein is Large ribosomal subunit protein bL19.